Consider the following 242-residue polypeptide: N-glycosylase/DNA lyase (242 aa).

Q26, S53, and W64 together coordinate 8-oxoguanine. The tract at residues 120 to 184 is helix-hairpin-helix; it reads EGYYKNMKML…EDLRIKSVTS (65 aa). K144 serves as the catalytic Schiff-base intermediate with DNA. 8-oxoguanine contacts are provided by F148 and P174. D176 is an active-site residue. 2 residues coordinate 8-oxoguanine: D210 and W214.

Belongs to the archaeal N-glycosylase/DNA lyase (AGOG) family.

It carries out the reaction 2'-deoxyribonucleotide-(2'-deoxyribose 5'-phosphate)-2'-deoxyribonucleotide-DNA = a 3'-end 2'-deoxyribonucleotide-(2,3-dehydro-2,3-deoxyribose 5'-phosphate)-DNA + a 5'-end 5'-phospho-2'-deoxyribonucleoside-DNA + H(+). Its function is as follows. DNA repair enzyme that is part of the base excision repair (BER) pathway; protects from oxidative damage by removing the major product of DNA oxidation, 8-oxoguanine (GO), from single- and double-stranded DNA substrates. In Pyrococcus furiosus (strain ATCC 43587 / DSM 3638 / JCM 8422 / Vc1), this protein is N-glycosylase/DNA lyase.